Reading from the N-terminus, the 309-residue chain is Tagatose-6-phosphate kinase (309 aa).

Belongs to the carbohydrate kinase PfkB family. LacC subfamily.

The enzyme catalyses D-tagatofuranose 6-phosphate + ATP = D-tagatofuranose 1,6-bisphosphate + ADP + H(+). The protein operates within carbohydrate metabolism; D-tagatose 6-phosphate degradation; D-glyceraldehyde 3-phosphate and glycerone phosphate from D-tagatose 6-phosphate: step 1/2. This Streptococcus pyogenes serotype M28 (strain MGAS6180) protein is Tagatose-6-phosphate kinase.